Reading from the N-terminus, the 95-residue chain is Ferredoxin-like protein FixX (95 aa).

The protein belongs to the bacterial-type ferredoxin family. FixX subfamily.

Could be part of an electron transfer system required for anaerobic carnitine reduction. Could be a 3Fe-4S cluster-containing protein. The protein is Ferredoxin-like protein FixX (fixX) of Shigella flexneri.